We begin with the raw amino-acid sequence, 229 residues long: Large ribosomal RNA subunit accumulation protein YCED homolog 2, chloroplastic (229 aa).

The N-terminal 42 residues, 1–42 (MDVRCLISPNLLNSKIKVSGNTHHLPFSSLSKKHQASSPIQA), are a transit peptide targeting the chloroplast.

The protein belongs to the DUF177 domain family.

Its subcellular location is the plastid. The protein resides in the chloroplast. In terms of biological role, may play a role in synthesis, processing and/or stability of 23S rRNA. The sequence is that of Large ribosomal RNA subunit accumulation protein YCED homolog 2, chloroplastic from Arabidopsis thaliana (Mouse-ear cress).